Consider the following 218-residue polypeptide: Dual specificity protein phosphatase TpbA (218 aa).

The N-terminal stretch at 1–28 (MHRSPLAWLRLLLAAVLGAFLLGGPLHA) is a signal peptide. Residues 44–188 (DPSINLYRMS…YVRGADVDGL (145 aa)) enclose the Tyrosine-protein phosphatase domain. Aspartate 105 (proton donor/acceptor) is an active-site residue. Cysteine 132 acts as the Phosphocysteine intermediate in catalysis.

This sequence belongs to the protein-tyrosine phosphatase family.

The protein resides in the periplasm. The enzyme catalyses O-phospho-L-tyrosyl-[protein] + H2O = L-tyrosyl-[protein] + phosphate. It carries out the reaction O-phospho-L-threonyl-[protein] + H2O = L-threonyl-[protein] + phosphate. The catalysed reaction is O-phospho-L-seryl-[protein] + H2O = L-seryl-[protein] + phosphate. Functionally, phosphatase that regulates diverse phenotypes in P.aeruginosa via regulation of the concentration of cellular c-di-GMP. Acts by dephosphorylating the membrane-anchored diguanylate cyclase TpbB at tyrosine and serine/threonine sites, leading to inactivation of TpbB and reduced c-di-GMP production. In vitro shows phosphatase activity toward p-nitrophenyl phosphate (pNPP) and tyrosine phosphopeptides. Can efficiently dephosphorylate two phosphorylated peptides derived from the periplasmic domain of TpbB, with a strong preference for Tyr-48 over Tyr-62. This chain is Dual specificity protein phosphatase TpbA, found in Pseudomonas aeruginosa (strain ATCC 15692 / DSM 22644 / CIP 104116 / JCM 14847 / LMG 12228 / 1C / PRS 101 / PAO1).